The chain runs to 214 residues: tRNA (guanine-N(7)-)-methyltransferase (214 aa).

Residues glutamate 43, glutamate 68, asparagine 99, and aspartate 121 each contribute to the S-adenosyl-L-methionine site. Aspartate 121 is an active-site residue. Substrate-binding positions include lysine 125, aspartate 157, and 194–197 (TEYE).

The protein belongs to the class I-like SAM-binding methyltransferase superfamily. TrmB family.

The catalysed reaction is guanosine(46) in tRNA + S-adenosyl-L-methionine = N(7)-methylguanosine(46) in tRNA + S-adenosyl-L-homocysteine. It participates in tRNA modification; N(7)-methylguanine-tRNA biosynthesis. Functionally, catalyzes the formation of N(7)-methylguanine at position 46 (m7G46) in tRNA. The chain is tRNA (guanine-N(7)-)-methyltransferase from Alkaliphilus metalliredigens (strain QYMF).